We begin with the raw amino-acid sequence, 209 residues long: Kynurenine formamidase (209 aa).

Tryptophan 18 contacts substrate. Residues histidine 48, histidine 52, and aspartate 54 each coordinate Zn(2+). The Proton donor/acceptor role is filled by histidine 58. Zn(2+) contacts are provided by histidine 160 and glutamate 172.

Belongs to the Cyclase 1 superfamily. KynB family. In terms of assembly, homodimer. Zn(2+) is required as a cofactor.

The catalysed reaction is N-formyl-L-kynurenine + H2O = L-kynurenine + formate + H(+). It participates in amino-acid degradation; L-tryptophan degradation via kynurenine pathway; L-kynurenine from L-tryptophan: step 2/2. In terms of biological role, catalyzes the hydrolysis of N-formyl-L-kynurenine to L-kynurenine, the second step in the kynurenine pathway of tryptophan degradation. The sequence is that of Kynurenine formamidase from Sphingopyxis alaskensis (strain DSM 13593 / LMG 18877 / RB2256) (Sphingomonas alaskensis).